Consider the following 174-residue polypeptide: MTAVSIRRPIRILGIDPGLRRTGWGVVDSDGNRLVYVACGSVEPRDTLPLAERLLAIHDGLAKVLAAHAPAEAAVEQTFVNKDGAATLKLGQARGVAMLVPAMHGLLVAEYAPNLVKKTVVGAGHADKTQIQMMLKILLPKADPKTADAADALAIAITHAHHRGAAQRLKAVGA.

Catalysis depends on residues D16, E76, and D148. Mg(2+) contacts are provided by D16, E76, and D148.

Belongs to the RuvC family. Homodimer which binds Holliday junction (HJ) DNA. The HJ becomes 2-fold symmetrical on binding to RuvC with unstacked arms; it has a different conformation from HJ DNA in complex with RuvA. In the full resolvosome a probable DNA-RuvA(4)-RuvB(12)-RuvC(2) complex forms which resolves the HJ. Mg(2+) serves as cofactor.

It is found in the cytoplasm. The enzyme catalyses Endonucleolytic cleavage at a junction such as a reciprocal single-stranded crossover between two homologous DNA duplexes (Holliday junction).. Its function is as follows. The RuvA-RuvB-RuvC complex processes Holliday junction (HJ) DNA during genetic recombination and DNA repair. Endonuclease that resolves HJ intermediates. Cleaves cruciform DNA by making single-stranded nicks across the HJ at symmetrical positions within the homologous arms, yielding a 5'-phosphate and a 3'-hydroxyl group; requires a central core of homology in the junction. The consensus cleavage sequence is 5'-(A/T)TT(C/G)-3'. Cleavage occurs on the 3'-side of the TT dinucleotide at the point of strand exchange. HJ branch migration catalyzed by RuvA-RuvB allows RuvC to scan DNA until it finds its consensus sequence, where it cleaves and resolves the cruciform DNA. This chain is Crossover junction endodeoxyribonuclease RuvC, found in Rhodopseudomonas palustris (strain ATCC BAA-98 / CGA009).